The following is a 437-amino-acid chain: Sonic hedgehog protein (437 aa).

An N-terminal signal peptide occupies residues 1–24 (MLLLLARCFLVILASSLLVCPGLA). Cys25 is lipidated: N-palmitoyl cysteine. The short motif at 33–39 (KRRHPKK) is the Cardin-Weintraub element. The Ca(2+) site is built by Glu90, Glu91, Asp96, Thr126, Glu127, Asp130, and Asp132. 3 residues coordinate Zn(2+): His141, Asp148, and His183. A lipid anchor (Cholesterol glycine ester) is attached at Gly198. N-linked (GlcNAc...) asparagine glycosylation occurs at Asn279.

It belongs to the hedgehog family. Interacts with HHATL/GUP1 which negatively regulates HHAT-mediated palmitoylation of the SHH N-terminus. Interacts with BOC and CDON. Interacts with HHIP. Interacts with DISP1 via its cholesterol anchor. Interacts with SCUBE2. Interacts with glypican GPC3. As to quaternary structure, multimer. In terms of processing, the C-terminal domain displays an autoproteolysis activity and a cholesterol transferase activity. Both activities result in the cleavage of the full-length protein and covalent attachment of a cholesterol moiety to the C-terminal of the newly generated N-terminal fragment (ShhN). Cholesterylation is required for the sonic hedgehog protein N-product targeting to lipid rafts and multimerization. ShhN is the active species in both local and long-range signaling, whereas the C-product (ShhC) is degraded in the endoplasmic reticulum. Post-translationally, N-palmitoylation by HHAT of ShhN is required for sonic hedgehog protein N-product multimerization and full activity. It is a prerequisite for the membrane-proximal positioning and the subsequent shedding of this N-terminal peptide. The lipidated N- and C-terminal peptides of ShhNp can be cleaved (shedding). The N-terminal palmitoylated peptide is cleaved at the Cardin-Weintraub (CW) motif site. The cleavage reduced the interactions with heparan sulfate. The cleavage is enhanced by SCUBE2. As to expression, expressed in a number of embryonic tissues including the notochord, ventral neural tube, floor plate, lung bud, zone of polarizing activity and posterior distal mesenchyme of limbs. In the adult, expressed in lung and neural retina.

Its subcellular location is the endoplasmic reticulum membrane. The protein resides in the golgi apparatus membrane. The protein localises to the cell membrane. It catalyses the reaction glycyl-L-cysteinyl-[protein] + cholesterol + H(+) = [protein]-C-terminal glycyl cholesterol ester + N-terminal L-cysteinyl-[protein]. Its function is as follows. The C-terminal part of the sonic hedgehog protein precursor displays an autoproteolysis and a cholesterol transferase activity. Both activities result in the cleavage of the full-length protein into two parts (ShhN and ShhC) followed by the covalent attachment of a cholesterol moiety to the C-terminal of the newly generated ShhN. Both activities occur in the reticulum endoplasmic. Once cleaved, ShhC is degraded in the endoplasmic reticulum. Functionally, the dually lipidated sonic hedgehog protein N-product (ShhNp) is a morphogen which is essential for a variety of patterning events during development. Induces ventral cell fate in the neural tube and somites. Involved in the patterning of the anterior-posterior axis of the developing limb bud. Essential for axon guidance. Binds to the patched (PTCH1) receptor, which functions in association with smoothened (SMO), to activate the transcription of target genes. In the absence of SHH, PTCH1 represses the constitutive signaling activity of SMO. The protein is Sonic hedgehog protein of Mus musculus (Mouse).